Consider the following 102-residue polypeptide: Salivary thrombin inhibitor anophelin (102 aa).

The signal sequence occupies residues 1-21 (MATKLIVIAFLCAALIAVVQS). A disordered region spans residues 25-102 (YAQGEEPTYD…SDSSSESTEH (78 aa)). Over residues 59–69 (SQLTEYANTAQ) the composition is skewed to polar residues. Residues 70–73 (DPGR) are blocks active site cleft of host thrombin in a reverse direction compared to substrates. Residues 80–90 (QANSNNGDQLP) show a composition bias toward polar residues. Residues 91–102 (SQSDSSSESTEH) show a composition bias toward low complexity.

Belongs to the anophelin family. As to quaternary structure, interacts with human F2 (thrombin); the interaction results in thrombin inhibition.

The protein resides in the secreted. Salivary protein with anticoagulant activity that inhibits host thrombin (F2). This Anopheles funestus (African malaria mosquito) protein is Salivary thrombin inhibitor anophelin.